The following is a 180-amino-acid chain: Trafficking protein particle complex subunit 3 (180 aa).

C68 is lipidated: S-palmitoyl cysteine.

Belongs to the TRAPP small subunits family. BET3 subfamily. As to quaternary structure, homodimer. Component of the multisubunit transport protein particle (TRAPP) complex, which includes at least TRAPPC2, TRAPPC2L, TRAPPC3, TRAPPC3L, TRAPPC4, TRAPPC5, TRAPPC8, TRAPPC9, TRAPPC10, TRAPPC11 and TRAPPC12. Heterodimer with TRAPPC6A. The heterodimer TRAPPC3-TRAPPC6A interacts with TRAPPC2L. Heterodimer with TRAPPC6b. The heterodimer TRAPPC6B-TRAPPC3 interacts with TRAPPC1 likely providing a core for TRAPP complex formation.

It is found in the golgi apparatus. It localises to the cis-Golgi network. The protein resides in the endoplasmic reticulum. Its function is as follows. May play a role in vesicular transport from endoplasmic reticulum to Golgi. The polypeptide is Trafficking protein particle complex subunit 3 (Homo sapiens (Human)).